Reading from the N-terminus, the 125-residue chain is Small ribosomal subunit protein uS13 (125 aa).

The disordered stretch occupies residues 93–125 (RRGLPVRGQRTKTNARTRKGPKRTVAGKKKAGR).

It belongs to the universal ribosomal protein uS13 family. In terms of assembly, part of the 30S ribosomal subunit. Forms a loose heterodimer with protein S19. Forms two bridges to the 50S subunit in the 70S ribosome.

Its function is as follows. Located at the top of the head of the 30S subunit, it contacts several helices of the 16S rRNA. In the 70S ribosome it contacts the 23S rRNA (bridge B1a) and protein L5 of the 50S subunit (bridge B1b), connecting the 2 subunits; these bridges are implicated in subunit movement. Contacts the tRNAs in the A and P-sites. This chain is Small ribosomal subunit protein uS13, found in Renibacterium salmoninarum (strain ATCC 33209 / DSM 20767 / JCM 11484 / NBRC 15589 / NCIMB 2235).